Consider the following 206-residue polypeptide: Small ribosomal subunit protein uS4 (206 aa).

One can recognise an S4 RNA-binding domain in the interval 96 to 156; it reads CRLDNVVYRM…EKAKNQLRIV (61 aa).

This sequence belongs to the universal ribosomal protein uS4 family. As to quaternary structure, part of the 30S ribosomal subunit. Contacts protein S5. The interaction surface between S4 and S5 is involved in control of translational fidelity.

Functionally, one of the primary rRNA binding proteins, it binds directly to 16S rRNA where it nucleates assembly of the body of the 30S subunit. With S5 and S12 plays an important role in translational accuracy. This is Small ribosomal subunit protein uS4 from Pseudomonas fluorescens (strain SBW25).